Here is a 443-residue protein sequence, read N- to C-terminus: KH domain-containing, RNA-binding, signal transduction-associated protein 1 (443 aa).

The interval 1–96 (MQRRDDPAAR…LPPSATASVK (96 aa)) is disordered. A compositionally biased stretch (low complexity) spans 10 to 21 (RMSRSSGRSGSM). Ser-18, Ser-20, and Ser-29 each carry phosphoserine. The residue at position 33 (Thr-33) is a Phosphothreonine. At Arg-45 the chain carries Asymmetric dimethylarginine; by PRMT1. Asymmetric dimethylarginine; partial; by PRMT1 is present on Arg-52. At Ser-58 the chain carries Phosphoserine. Thr-84 carries the post-translational modification Phosphothreonine; by MAPK1. Glycyl lysine isopeptide (Lys-Gly) (interchain with G-Cter in SUMO2) cross-links involve residues Lys-96 and Lys-102. Positions 100 to 260 (ENKYLPELMA…VKKFLVPDMM (161 aa)) are involved in homodimerization. Ser-113 carries the phosphoserine modification. Lys-139 is covalently cross-linked (Glycyl lysine isopeptide (Lys-Gly) (interchain with G-Cter in SUMO2)). Ser-150 carries the phosphoserine modification. Residues 171-197 (NFVGKILGPQGNTIKRLQEETGAKISV) form the KH domain. Lys-175 is subject to N6-acetyllysine; alternate. A Glycyl lysine isopeptide (Lys-Gly) (interchain with G-Cter in SUMO2); alternate cross-link involves residue Lys-175. Position 183 is a phosphothreonine (Thr-183). A compositionally biased stretch (low complexity) spans 280-293 (PSRGRGVPVRGRGA). The segment at 280 to 316 (PSRGRGVPVRGRGAAPPPPPVPRGRGVGPPRGALVRG) is disordered. 3 positions are modified to omega-N-methylarginine: Arg-282, Arg-284, and Arg-291. Asymmetric dimethylarginine; by PRMT1 is present on Arg-304. The segment covering 307 to 316 (GPPRGALVRG) has biased composition (low complexity). An omega-N-methylarginine; by PRMT1 mark is found at Arg-310, Arg-315, Arg-320, and Arg-325. At Arg-320 the chain carries Dimethylated arginine; in A2780 ovarian carcinoma cell line. Residues 327–346 (ATVTRGVPPPPTVRGAPAPR) form a disordered region. Dimethylated arginine; in A2780 ovarian carcinoma cell line occurs at positions 331 and 340. At Arg-331 the chain carries Asymmetric dimethylarginine; alternate. Position 331 is an omega-N-methylarginine; by PRMT1; alternate (Arg-331). Omega-N-methylarginine; by PRMT1 is present on Arg-340. The interval 351–443 (GIQRIPLPPP…AYREHPYGRY (93 aa)) is interaction with HNRNPA1. Tyr-387 carries the phosphotyrosine modification. Ser-390 is modified (phosphoserine). The segment at 400–420 (GHGEVQDSYEAYGQDDWNGTR) is interaction with ZBTB7A. Residues 411–443 (YGQDDWNGTRPSLKAPPARPVKGAYREHPYGRY) form a disordered region. Lys-432 is covalently cross-linked (Glycyl lysine isopeptide (Lys-Gly) (interchain with G-Cter in SUMO2)). The segment covering 434-443 (AYREHPYGRY) has biased composition (basic and acidic residues). 3 positions are modified to phosphotyrosine; by PTK6: Tyr-435, Tyr-440, and Tyr-443.

It belongs to the KHDRBS family. In terms of assembly, self-associates to form homooligomers when bound to RNA, oligomerization appears to be limited when binding to proteins; dimerization increases RNA affinity. Forms a trimeric complex in the nucleus consisting of BANP, HDAC6 and KHDRBS1/SAM68; HDAC6 keeps KHDRBS1 in a deacetylated state which inhibits the inclusion of CD44 alternate exons. The complex is disrupted by MAPK1/MAPK3-mediated phosphorylation of BANP which results in BANP export to the cytoplasm. This facilitates acetylation of KHDRBS1 and CD44 variant exon inclusion. Interacts with KHDRBS3/SLIM-2. Interacts with KHDRBS2/SLIM-1; heterooligomer formation of KHDRBS family proteins may modulate RNA substrate specificity. Interacts with RASA1, LCK, FYN, PTPN6, PLCG1, GRB2, CBL, JAK3, PIK3R, STAT3, APC, HNRNPA1. Interacts with PTK6 (via SH3 and SH2 domains). Forms a complex with ILF2, ILF3, YLPM1, RBMX, NCOA5 and PPP1CA. Does not interact with TPR. Interacts with PRMT1. Binds WBP4/FBP21 (via WW domains), FNBP4/FBP30 (via WW domains). Interacts (via Arg/Gly-rich-flanked Pro-rich regions) with FYN (via the SH3 domain). Interacts with the non-receptor tyrosine kinase SRMS; the interaction leads to phosphorylation of KHDRBS1. Interacts with ZBTB7A; negatively regulates KHDRBS1 splicing activity toward BCL2L1. In terms of processing, tyrosine phosphorylated by several non-receptor tyrosine kinases including LCK, FYN and JAK3. Also tyrosine phosphorylated by the non-receptor tyrosine kinase SRMS in an EGF-dependent manner. Negatively correlates with ability to bind RNA but required for many interactions with proteins. Phosphorylation by PTK6 negatively regulates its RNA binding ability. Phosphorylation by PTK6 at Tyr-440 dictates the nuclear localization of KHDRBS1. Phosphorylation at Tyr-387 disrupts interaction with APC. Phosphorylation at tyrosine residues by FYN inverts activity on modulation of BCL2L1 alternative splicing. Post-translationally, acetylated. Positively correlates with ability to bind RNA. Deacetylated by HDAC6; this regulates alternative splicing by inhibiting the inclusion of CD44 alternate exons. Arginine methylation is required for nuclear localization. Also can affect interaction with other proteins. Inhibits interaction with Src-like SH3 domains, but not interaction with WW domains of WBP4/FBP21 and FNBP4/FBP30. Ubiquitously expressed in all tissue examined. Isoform 1 is expressed at lower levels in brain, skeletal muscle, and liver whereas isoform 3 is intensified in skeletal muscle and in liver.

The protein localises to the nucleus. The protein resides in the cytoplasm. Its subcellular location is the membrane. In terms of biological role, recruited and tyrosine phosphorylated by several receptor systems, for example the T-cell, leptin and insulin receptors. Once phosphorylated, functions as an adapter protein in signal transduction cascades by binding to SH2 and SH3 domain-containing proteins. Role in G2-M progression in the cell cycle. Represses CBP-dependent transcriptional activation apparently by competing with other nuclear factors for binding to CBP. Also acts as a putative regulator of mRNA stability and/or translation rates and mediates mRNA nuclear export. Positively regulates the association of constitutive transport element (CTE)-containing mRNA with large polyribosomes and translation initiation. According to some authors, is not involved in the nucleocytoplasmic export of unspliced (CTE)-containing RNA species according to. RNA-binding protein that plays a role in the regulation of alternative splicing and influences mRNA splice site selection and exon inclusion. Binds to RNA containing 5'-[AU]UAA-3' as a bipartite motif spaced by more than 15 nucleotides. Binds poly(A). Can regulate CD44 alternative splicing in a Ras pathway-dependent manner. In cooperation with HNRNPA1 modulates alternative splicing of BCL2L1 by promoting splicing toward isoform Bcl-X(S), and of SMN1. Can regulate alternative splicing of NRXN1 and NRXN3 in the laminin G-like domain 6 containing the evolutionary conserved neurexin alternative spliced segment 4 (AS4) involved in neurexin selective targeting to postsynaptic partners. In a neuronal activity-dependent manner cooperates synergistically with KHDRBS2/SLIM-1 in regulation of NRXN1 exon skipping at AS4. The cooperation with KHDRBS2/SLIM-1 is antagonistic for regulation of NXRN3 alternative splicing at AS4. Functionally, isoform 3, which is expressed in growth-arrested cells only, inhibits S phase. The protein is KH domain-containing, RNA-binding, signal transduction-associated protein 1 of Homo sapiens (Human).